A 664-amino-acid chain; its full sequence is PAN2-PAN3 deadenylation complex subunit PAN3 (664 aa).

2 disordered regions span residues 1–27 (MATT…GREN) and 54–134 (DPHK…PGTM). The C3H1-type zinc finger occupies 27–56 (NAKDTLCRNVTIYGRCRYEDKGCAFNHDPH). The span at 74–96 (DSPSFTPSILSSNGSSPTSQSAT) shows a compositional bias: polar residues. The segment covering 115–131 (PRSISSRSNSSTPTTRP) has biased composition (low complexity). Positions 265–525 (QTLPNTQLPA…NIDIFITGIS (261 aa)) are pseudokinase domain. ATP contacts are provided by residues arginine 317, 366 to 373 (DYHPLSKT), and 425 to 426 (SK). The stretch at 526–564 (STLMSTFDSALHLDDQLTSDLSRELENGRLVRLMTKLNF) forms a coiled coil. Positions 565–664 (VNERPEYEHD…LKPSASRRLH (100 aa)) are knob domain.

The protein belongs to the protein kinase superfamily. PAN3 family. Homodimer. Forms a heterotrimer with a catalytic subunit pan2 to form the poly(A)-nuclease (PAN) deadenylation complex. Interacts (via PAM-2 motif) with poly(A)-binding protein pab1 (via PABC domain), conferring substrate specificity of the enzyme complex.

Its subcellular location is the cytoplasm. Regulatory subunit of the poly(A)-nuclease (PAN) deadenylation complex, one of two cytoplasmic mRNA deadenylases involved in mRNA turnover. PAN specifically shortens poly(A) tails of RNA and the activity is stimulated by poly(A)-binding protein pab1. PAN deadenylation is followed by rapid degradation of the shortened mRNA tails by the CCR4-NOT complex. Deadenylated mRNAs are then degraded by two alternative mechanisms, namely exosome-mediated 3'-5' exonucleolytic degradation, or deadenylation-dependent mRNA decaping and subsequent 5'-3' exonucleolytic degradation by xrn1. May also be involved in post-transcriptional maturation of mRNA poly(A) tails. pan3 acts as a positive regulator for PAN activity, recruiting the catalytic subunit pan2 to mRNA via its interaction with RNA and with pab1. This chain is PAN2-PAN3 deadenylation complex subunit PAN3, found in Aspergillus niger (strain ATCC MYA-4892 / CBS 513.88 / FGSC A1513).